Reading from the N-terminus, the 145-residue chain is 3-hydroxyacyl-[acyl-carrier-protein] dehydratase FabZ (145 aa).

Histidine 47 is a catalytic residue.

Belongs to the thioester dehydratase family. FabZ subfamily.

Its subcellular location is the cytoplasm. It catalyses the reaction a (3R)-hydroxyacyl-[ACP] = a (2E)-enoyl-[ACP] + H2O. Functionally, involved in unsaturated fatty acids biosynthesis. Catalyzes the dehydration of short chain beta-hydroxyacyl-ACPs and long chain saturated and unsaturated beta-hydroxyacyl-ACPs. The sequence is that of 3-hydroxyacyl-[acyl-carrier-protein] dehydratase FabZ from Polaromonas naphthalenivorans (strain CJ2).